Consider the following 139-residue polypeptide: S-adenosylmethionine decarboxylase proenzyme (139 aa).

The active-site Schiff-base intermediate with substrate; via pyruvic acid is S63. A Pyruvic acid (Ser); by autocatalysis modification is found at S63. The active-site Proton acceptor; for processing activity is H68. The Proton donor; for catalytic activity role is filled by C83.

It belongs to the prokaryotic AdoMetDC family. Type 1 subfamily. As to quaternary structure, heterotetramer of two alpha and two beta chains arranged as a dimer of alpha/beta heterodimers. Requires pyruvate as cofactor. Is synthesized initially as an inactive proenzyme. Formation of the active enzyme involves a self-maturation process in which the active site pyruvoyl group is generated from an internal serine residue via an autocatalytic post-translational modification. Two non-identical subunits are generated from the proenzyme in this reaction, and the pyruvate is formed at the N-terminus of the alpha chain, which is derived from the carboxyl end of the proenzyme. The post-translation cleavage follows an unusual pathway, termed non-hydrolytic serinolysis, in which the side chain hydroxyl group of the serine supplies its oxygen atom to form the C-terminus of the beta chain, while the remainder of the serine residue undergoes an oxidative deamination to produce ammonia and the pyruvoyl group blocking the N-terminus of the alpha chain.

It carries out the reaction S-adenosyl-L-methionine + H(+) = S-adenosyl 3-(methylsulfanyl)propylamine + CO2. It participates in amine and polyamine biosynthesis; S-adenosylmethioninamine biosynthesis; S-adenosylmethioninamine from S-adenosyl-L-methionine: step 1/1. In terms of biological role, catalyzes the decarboxylation of S-adenosylmethionine to S-adenosylmethioninamine (dcAdoMet), the propylamine donor required for the synthesis of the polyamines spermine and spermidine from the diamine putrescine. The polypeptide is S-adenosylmethionine decarboxylase proenzyme (Pyrococcus horikoshii (strain ATCC 700860 / DSM 12428 / JCM 9974 / NBRC 100139 / OT-3)).